The following is a 375-amino-acid chain: 1-deoxy-D-xylulose 5-phosphate reductoisomerase (375 aa).

Residues Thr10, Gly11, Ser12, Val13, Lys37, and Asn114 each contribute to the NADPH site. Residue Lys115 coordinates 1-deoxy-D-xylulose 5-phosphate. Glu116 is an NADPH binding site. Residue Asp136 participates in Mn(2+) binding. 1-deoxy-D-xylulose 5-phosphate is bound by residues Ser137, Glu138, Ser162, and His185. Mn(2+) is bound at residue Glu138. Gly191 contributes to the NADPH binding site. 1-deoxy-D-xylulose 5-phosphate-binding residues include Ser198, Asn203, Lys204, and Glu207. Mn(2+) is bound at residue Glu207.

The protein belongs to the DXR family. The cofactor is Mg(2+). It depends on Mn(2+) as a cofactor.

The enzyme catalyses 2-C-methyl-D-erythritol 4-phosphate + NADP(+) = 1-deoxy-D-xylulose 5-phosphate + NADPH + H(+). The protein operates within isoprenoid biosynthesis; isopentenyl diphosphate biosynthesis via DXP pathway; isopentenyl diphosphate from 1-deoxy-D-xylulose 5-phosphate: step 1/6. In terms of biological role, catalyzes the NADPH-dependent rearrangement and reduction of 1-deoxy-D-xylulose-5-phosphate (DXP) to 2-C-methyl-D-erythritol 4-phosphate (MEP). This chain is 1-deoxy-D-xylulose 5-phosphate reductoisomerase, found in Sulfurihydrogenibium sp. (strain YO3AOP1).